The primary structure comprises 322 residues: Undecaprenyl-phosphate 4-deoxy-4-formamido-L-arabinose transferase (322 aa).

Topologically, residues 1 to 235 are cytoplasmic; the sequence is MFEIHPVKKV…TCLTTTPLRM (235 aa). Residues 236–256 form a helical membrane-spanning segment; it reads LSLLGSIIAIGGFSIAVLLVI. Residues 257–269 lie on the Periplasmic side of the membrane; the sequence is LRLTFGPQWAAEG. The helical transmembrane segment at 270-290 threads the bilayer; it reads VFMLFAVLFTFIGAQFIGMGL. At 291-322 the chain is on the cytoplasmic side; that stretch reads LGEYIGRIYTDVRARPRYFVQQVIRPSSKENE.

Belongs to the glycosyltransferase 2 family.

The protein resides in the cell inner membrane. It catalyses the reaction UDP-4-deoxy-4-formamido-beta-L-arabinose + di-trans,octa-cis-undecaprenyl phosphate = 4-deoxy-4-formamido-alpha-L-arabinopyranosyl di-trans,octa-cis-undecaprenyl phosphate + UDP. It functions in the pathway glycolipid biosynthesis; 4-amino-4-deoxy-alpha-L-arabinose undecaprenyl phosphate biosynthesis; 4-amino-4-deoxy-alpha-L-arabinose undecaprenyl phosphate from UDP-4-deoxy-4-formamido-beta-L-arabinose and undecaprenyl phosphate: step 1/2. It participates in bacterial outer membrane biogenesis; lipopolysaccharide biosynthesis. In terms of biological role, catalyzes the transfer of 4-deoxy-4-formamido-L-arabinose from UDP to undecaprenyl phosphate. The modified arabinose is attached to lipid A and is required for resistance to polymyxin and cationic antimicrobial peptides. The polypeptide is Undecaprenyl-phosphate 4-deoxy-4-formamido-L-arabinose transferase (Shigella sonnei (strain Ss046)).